The chain runs to 295 residues: Proline-rich proteoglycan 2 (295 aa).

Positions 1–16 (MLVVLLTAALLVLSSA) are cleaved as a signal peptide. Residues 16 to 295 (AQGVDEEVVY…QSSFLWSFSA (280 aa)) form a disordered region. Low complexity predominate over residues 26 to 41 (EDSSQQLELEQQSQGH). A compositionally biased stretch (pro residues) spans 48–58 (PPPGGLPPRPP). Residues 62–78 (ENGDGDDNDDGDDDGSG) show a composition bias toward acidic residues. 2 stretches are compositionally biased toward pro residues: residues 100 to 187 (PPPA…PPGG) and 194 to 278 (QGPP…PQGP).

Contains glycosaminoglycans of chondroitin-sulfate and heparan types.

The protein resides in the secreted. The polypeptide is Proline-rich proteoglycan 2 (Prpg2) (Rattus norvegicus (Rat)).